A 442-amino-acid polypeptide reads, in one-letter code: Tyrosine--tRNA ligase (442 aa).

Y55 provides a ligand contact to L-tyrosine. A 'HIGH' region motif is present at residues 60–69 (PTAPSLHLGN). L-tyrosine is bound by residues Y190 and Q194. Residues 250-254 (KFGKS) carry the 'KMSKS' region motif. Residue K253 participates in ATP binding. The S4 RNA-binding domain maps to 373 to 438 (VAIAQALVDT…GKKTLAGVFV (66 aa)).

Belongs to the class-I aminoacyl-tRNA synthetase family. TyrS type 1 subfamily. In terms of assembly, homodimer.

It is found in the cytoplasm. The catalysed reaction is tRNA(Tyr) + L-tyrosine + ATP = L-tyrosyl-tRNA(Tyr) + AMP + diphosphate + H(+). Catalyzes the attachment of tyrosine to tRNA(Tyr) in a two-step reaction: tyrosine is first activated by ATP to form Tyr-AMP and then transferred to the acceptor end of tRNA(Tyr). This chain is Tyrosine--tRNA ligase, found in Leifsonia xyli subsp. xyli (strain CTCB07).